The following is a 469-amino-acid chain: uncharacterized protein (469 aa).

3 consecutive transmembrane segments (helical) span residues aspartate 42–isoleucine 62, isoleucine 179–serine 199, and asparagine 249–valine 269.

The protein resides in the cell membrane. This is an uncharacterized protein from Methanocaldococcus jannaschii (strain ATCC 43067 / DSM 2661 / JAL-1 / JCM 10045 / NBRC 100440) (Methanococcus jannaschii).